A 313-amino-acid polypeptide reads, in one-letter code: Solute carrier family 35 member E3 (313 aa).

10 helical membrane-spanning segments follow: residues 17-37 (GLLL…WIYV), 40-60 (GFPN…GLYV), 77-97 (LLLL…SLQN), 100-120 (IGTY…IQTL), 130-147 (IRLT…NSYY), 153-173 (FLGT…QVWV), 187-206 (LLYY…VPFF), 225-245 (LMVL…YWII), 252-272 (TYNM…YVLF), and 275-295 (PLSI…LAYT).

Belongs to the TPT transporter family. SLC35E subfamily.

The protein localises to the membrane. In terms of biological role, putative transporter. The chain is Solute carrier family 35 member E3 (SLC35E3) from Bos taurus (Bovine).